An 83-amino-acid polypeptide reads, in one-letter code: Small ribosomal subunit protein bS16 (83 aa).

Belongs to the bacterial ribosomal protein bS16 family.

The protein is Small ribosomal subunit protein bS16 of Syntrophus aciditrophicus (strain SB).